The primary structure comprises 256 residues: 5-keto-4-deoxy-D-glucarate aldolase (256 aa).

H50 acts as the Proton acceptor in catalysis. Q151 is a substrate binding site. Residue E153 participates in Mg(2+) binding. Residues S178 and D179 each coordinate substrate. D179 contacts Mg(2+).

This sequence belongs to the HpcH/HpaI aldolase family. KDGluc aldolase subfamily. Homohexamer; trimer of dimers. Mg(2+) is required as a cofactor.

The enzyme catalyses 5-dehydro-4-deoxy-D-glucarate = 2-hydroxy-3-oxopropanoate + pyruvate. It carries out the reaction 2-dehydro-3-deoxy-D-glucarate = 2-hydroxy-3-oxopropanoate + pyruvate. Its pathway is carbohydrate acid metabolism; galactarate degradation; D-glycerate from galactarate: step 2/3. In terms of biological role, catalyzes the reversible retro-aldol cleavage of both 5-keto-4-deoxy-D-glucarate and 2-keto-3-deoxy-D-glucarate to pyruvate and tartronic semialdehyde. The chain is 5-keto-4-deoxy-D-glucarate aldolase from Escherichia coli (strain ATCC 8739 / DSM 1576 / NBRC 3972 / NCIMB 8545 / WDCM 00012 / Crooks).